Here is a 131-residue protein sequence, read N- to C-terminus: Small ribosomal subunit protein uS11 (131 aa).

The protein belongs to the universal ribosomal protein uS11 family. Part of the 30S ribosomal subunit. Interacts with proteins S7 and S18. Binds to IF-3.

In terms of biological role, located on the platform of the 30S subunit, it bridges several disparate RNA helices of the 16S rRNA. Forms part of the Shine-Dalgarno cleft in the 70S ribosome. This is Small ribosomal subunit protein uS11 from Bacillus pumilus (strain SAFR-032).